We begin with the raw amino-acid sequence, 195 residues long: UDP-N-acetylbacillosamine N-acetyltransferase (195 aa).

Residues 13 to 15 (SGH), 35 to 36 (DD), and Gly56 each bind substrate. His125 acts as the Proton acceptor in catalysis. Positions 134, 155, and 173 each coordinate acetyl-CoA.

Belongs to the transferase hexapeptide repeat family. In terms of assembly, homotrimer.

The catalysed reaction is UDP-N-acetylbacillosamine + acetyl-CoA = UDP-N,N'-diacetylbacillosamine + CoA + H(+). It participates in protein modification; protein glycosylation. Functionally, acetyltransferase that modifies the UDP-4-amino-sugar to form UDP-N,N'-diacetylbacillosamine in the N-linked protein glycosylation pathway. The sequence is that of UDP-N-acetylbacillosamine N-acetyltransferase (pglD) from Campylobacter jejuni subsp. jejuni serotype O:2 (strain ATCC 700819 / NCTC 11168).